The primary structure comprises 328 residues: MIRFAIIGTNWITDRFLESAADIEDFQLTAVYSRSAERAGEFAAKHNAAHAFSDLQEMAASDCFDAVYIASPNALHKEQAVLFMNHGKHVLCEKPFASNTKETEEMISAAKANGVVLMEAMKTTFLPNFKELKKHLHKIGTVRRFTASYCQYSSRYDAFRSGTVLNAFQPELSNGSLMDIGVYCIYPAVVLFGAPKDVKANGYALSSGVDGEGTVILSYDGFEAVLMHSKISTSYAPAEIQGEDGTIVIDTIHRPERVEIRYRDGRLENIAIPDPKPAMFYEAEEFVTLIKENKLESEENTFERSLTTAKIMEEARKQMGIVYPADQA.

This sequence belongs to the Gfo/Idh/MocA family.

The enzyme catalyses scyllo-inositol + NADP(+) = scyllo-inosose + NADPH + H(+). Catalyzes the NADPH-dependent reduction of scyllo-inosose (SIS) to scyllo-inositol (SI) in vitro, but is unable to dehydrogenate scyllo-inositol and myo-inositol. Is less efficient than the functional paralog IolW. Under physiological conditions, may primarily function as an NADPH-dependent oxidoreductase that reduces carbonyl group(s) in its substrates. Cannot use NADH instead of NADPH. The polypeptide is scyllo-inositol 2-dehydrogenase (NADP(+)) IolU (Bacillus subtilis (strain 168)).